Reading from the N-terminus, the 284-residue chain is Tryptophan 2,3-dioxygenase (284 aa).

Substrate is bound by residues F51–H55, Y113, and R117. Heme is bound at residue H240. A substrate-binding site is contributed by T254.

Belongs to the tryptophan 2,3-dioxygenase family. In terms of assembly, homotetramer. It depends on heme as a cofactor.

It carries out the reaction L-tryptophan + O2 = N-formyl-L-kynurenine. The protein operates within amino-acid degradation; L-tryptophan degradation via kynurenine pathway; L-kynurenine from L-tryptophan: step 1/2. Functionally, heme-dependent dioxygenase that catalyzes the oxidative cleavage of the L-tryptophan (L-Trp) pyrrole ring and converts L-tryptophan to N-formyl-L-kynurenine. Catalyzes the oxidative cleavage of the indole moiety. The chain is Tryptophan 2,3-dioxygenase from Arthrobacter sp. (strain FB24).